We begin with the raw amino-acid sequence, 431 residues long: Protein translocase subunit SecY 1 (431 aa).

Transmembrane regions (helical) follow at residues 18–38 (IYFT…TVPG), 67–87 (YSIF…IQLL), 115–135 (YLTL…FNAL), 150–170 (VEIA…GDEI), 178–198 (GVSV…LYQI), 215–235 (ILFF…VTWV), 268–288 (VIPV…LMAF), 312–332 (GVII…FVQV), 365–385 (LIKL…LPQL), and 392–412 (LPSS…VVLE).

This sequence belongs to the SecY/SEC61-alpha family. As to quaternary structure, component of the Sec protein translocase complex. Heterotrimer consisting of SecY, SecE and SecG subunits. The heterotrimers can form oligomers, although 1 heterotrimer is thought to be able to translocate proteins. Interacts with the ribosome. Interacts with SecDF, and other proteins may be involved. Interacts with SecA.

The protein localises to the cell membrane. Its function is as follows. The central subunit of the protein translocation channel SecYEG. Consists of two halves formed by TMs 1-5 and 6-10. These two domains form a lateral gate at the front which open onto the bilayer between TMs 2 and 7, and are clamped together by SecE at the back. The channel is closed by both a pore ring composed of hydrophobic SecY resides and a short helix (helix 2A) on the extracellular side of the membrane which forms a plug. The plug probably moves laterally to allow the channel to open. The ring and the pore may move independently. This is Protein translocase subunit SecY 1 from Lactobacillus kefiranofaciens subsp. kefiranofaciens.